Here is a 231-residue protein sequence, read N- to C-terminus: Very-long-chain (3R)-3-hydroxyacyl-CoA dehydratase 4 (231 aa).

Residues 1–19 (MGPVALPTWLQPRYRKNAY) lie on the Cytoplasmic side of the membrane. Residues 20–40 (LFIYYLIQFCGHSWIFTNMTV) form a helical membrane-spanning segment. At 41–56 (RFFSFGKDSMVDTFYA) the chain is on the lumenal side. The helical transmembrane segment at 57 to 77 (IGLVMQLCQSISLLELLHIYV) threads the bilayer. Residues 78–112 (GIESNHLLPRILQLTERIIVLFMVITSQEEVQEKY) lie on the Cytoplasmic side of the membrane. The helical transmembrane segment at 113 to 133 (VVCVLFIFRNLLDMVRYTYSM) threads the bilayer. Topologically, residues 134–135 (LS) are lumenal. A helical transmembrane segment spans residues 136–156 (VIGISYAVLTWFSQTLWMPIY). Tyrosine 156 is a catalytic residue. Proline 157 is a topological domain (cytoplasmic). The helical transmembrane segment at 158 to 178 (LCVLAEAFTIYQSLPYFESFG) threads the bilayer. Glutamate 163 is an active-site residue. Residues 179-189 (TYSTKLPFDLS) lie on the Lumenal side of the membrane. The helical transmembrane segment at 190–210 (FYFPYVLKIYLMMLFVGMYFT) threads the bilayer. The Cytoplasmic portion of the chain corresponds to 211-231 (YNHLYSERRDILRVFPNKKKM).

The protein belongs to the very long-chain fatty acids dehydratase HACD family. May interact with enzymes of the ELO family (including ELOVL1); with those enzymes that mediate condensation, the first of the four steps of the reaction cycle responsible for fatty acids elongation, may be part of a larger fatty acids elongase complex.

The protein resides in the endoplasmic reticulum membrane. The catalysed reaction is a very-long-chain (3R)-3-hydroxyacyl-CoA = a very-long-chain (2E)-enoyl-CoA + H2O. It carries out the reaction (3R)-hydroxyhexadecanoyl-CoA = (2E)-hexadecenoyl-CoA + H2O. It functions in the pathway lipid metabolism; fatty acid biosynthesis. In terms of biological role, catalyzes the third of the four reactions of the long-chain fatty acids elongation cycle. This endoplasmic reticulum-bound enzymatic process, allows the addition of two carbons to the chain of long- and very long-chain fatty acids/VLCFAs per cycle. This enzyme catalyzes the dehydration of the 3-hydroxyacyl-CoA intermediate into trans-2,3-enoyl-CoA, within each cycle of fatty acid elongation. Thereby, it participates in the production of VLCFAs of different chain lengths that are involved in multiple biological processes as precursors of membrane lipids and lipid mediators. The polypeptide is Very-long-chain (3R)-3-hydroxyacyl-CoA dehydratase 4 (Bos taurus (Bovine)).